The sequence spans 104 residues: Guanidinium exporter (104 aa).

The Cytoplasmic portion of the chain corresponds to 1 to 3 (MSW). A helical membrane pass occupies residues 4-26 (IILFVAGLLEIVWAVGLKYTHGF). Residues 27–32 (TRLTPS) are Periplasmic-facing. Residues 33 to 50 (IITISAMIVSMGMLSYAM) traverse the membrane as a helical segment. Over 51-54 (KGLP) the chain is Cytoplasmic. Residues 55 to 77 (AGTAYAIWTGIGAVGTAIFGIIV) form a helical membrane-spanning segment. The Periplasmic segment spans residues 78 to 83 (FGESAN). Residues 84–103 (IYRLLSLAMIVFGIIGLKLA) form a helical membrane-spanning segment. Ser104 is a topological domain (cytoplasmic).

Belongs to the drug/metabolite transporter (DMT) superfamily. Small multidrug resistance (SMR) (TC 2.A.7.1) family. Gdx/SugE subfamily.

It localises to the cell inner membrane. Its function is as follows. Guanidinium ion exporter. Couples guanidinium export to the proton motive force, exchanging one guanidinium ion for two protons. The polypeptide is Guanidinium exporter (Proteus vulgaris).